Consider the following 286-residue polypeptide: Pyridoxine 4-dehydrogenase (286 aa).

Catalysis depends on Tyr59, which acts as the Proton donor. 210 to 218 (FPLGGFTPL) contacts NADP(+).

It belongs to the aldo/keto reductase family. Aldo/keto reductase 2 subfamily.

It catalyses the reaction pyridoxine + NADP(+) = pyridoxal + NADPH + H(+). The catalysed reaction is pyridoxine + NAD(+) = pyridoxal + NADH + H(+). Catalyzes the NAD(P)H-dependent reduction of pyridoxal to pyridoxine in vitro. Is not able to reduce 4-pyridoxate, and to oxidize pyridoxine or pyridoxamine. Has Kemp eliminase activity towards the non-physiological substrate 5-nitrobenzisoxazole, producing 4-nitro-2-cyanophenol; this activity is not considered to be physiologically relevant. This chain is Pyridoxine 4-dehydrogenase, found in Escherichia coli (strain K12).